The following is a 347-amino-acid chain: Protein RecA (347 aa).

64 to 71 lines the ATP pocket; the sequence is GPESSGKT.

The protein belongs to the RecA family.

It is found in the cytoplasm. Can catalyze the hydrolysis of ATP in the presence of single-stranded DNA, the ATP-dependent uptake of single-stranded DNA by duplex DNA, and the ATP-dependent hybridization of homologous single-stranded DNAs. It interacts with LexA causing its activation and leading to its autocatalytic cleavage. The protein is Protein RecA of Bartonella henselae (strain ATCC 49882 / DSM 28221 / CCUG 30454 / Houston 1) (Rochalimaea henselae).